Here is a 390-residue protein sequence, read N- to C-terminus: Elongation factor Tu 2 (390 aa).

The tr-type G domain occupies 10 to 201 (KPHVNVGTIG…LDEYVAVPPR (192 aa)). A G1 region spans residues 19 to 26 (GHVDHGKT). 19 to 26 (GHVDHGKT) is a binding site for GTP. Thr26 provides a ligand contact to Mg(2+). The segment at 55–59 (GITIA) is G2. Residues 76 to 79 (DCPG) form a G3 region. Residues 76-80 (DCPGH) and 131-134 (NKAD) each bind GTP. A G4 region spans residues 131 to 134 (NKAD). A G5 region spans residues 168 to 170 (SAL).

The protein belongs to the TRAFAC class translation factor GTPase superfamily. Classic translation factor GTPase family. EF-Tu/EF-1A subfamily. As to quaternary structure, monomer.

It is found in the cytoplasm. The enzyme catalyses GTP + H2O = GDP + phosphate + H(+). GTP hydrolase that promotes the GTP-dependent binding of aminoacyl-tRNA to the A-site of ribosomes during protein biosynthesis. This chain is Elongation factor Tu 2, found in Wolbachia pipientis wMel.